The following is a 456-amino-acid chain: tRNA modification GTPase MnmE (456 aa).

(6S)-5-formyl-5,6,7,8-tetrahydrofolate-binding residues include Arg-24, Glu-81, and Lys-120. One can recognise a TrmE-type G domain in the interval 216-379; the sequence is GMTVVIAGRP…LREHLKACMG (164 aa). Asn-226 contacts K(+). Residues 226-231, 245-251, 270-273, 335-338, and 359-361 each bind GTP; these read NAGKSS, TEIAGTT, DTAG, NKAD, and SAR. Ser-230 is a binding site for Mg(2+). Positions 245, 247, and 250 each coordinate K(+). A Mg(2+)-binding site is contributed by Thr-251. Lys-456 contributes to the (6S)-5-formyl-5,6,7,8-tetrahydrofolate binding site.

Belongs to the TRAFAC class TrmE-Era-EngA-EngB-Septin-like GTPase superfamily. TrmE GTPase family. As to quaternary structure, homodimer. Heterotetramer of two MnmE and two MnmG subunits. K(+) is required as a cofactor.

It is found in the cytoplasm. Functionally, exhibits a very high intrinsic GTPase hydrolysis rate. Involved in the addition of a carboxymethylaminomethyl (cmnm) group at the wobble position (U34) of certain tRNAs, forming tRNA-cmnm(5)s(2)U34. The polypeptide is tRNA modification GTPase MnmE (Pseudomonas syringae pv. syringae (strain B728a)).